A 359-amino-acid polypeptide reads, in one-letter code: 3-dehydroquinate synthase (359 aa).

NAD(+) contacts are provided by residues 105-109, 129-130, lysine 142, lysine 151, and 169-172; these read GVVGD, TT, and TIKT. 3 residues coordinate Zn(2+): glutamate 184, histidine 247, and histidine 263.

This sequence belongs to the sugar phosphate cyclases superfamily. Dehydroquinate synthase family. Co(2+) serves as cofactor. It depends on Zn(2+) as a cofactor. The cofactor is NAD(+).

The protein localises to the cytoplasm. It catalyses the reaction 7-phospho-2-dehydro-3-deoxy-D-arabino-heptonate = 3-dehydroquinate + phosphate. It participates in metabolic intermediate biosynthesis; chorismate biosynthesis; chorismate from D-erythrose 4-phosphate and phosphoenolpyruvate: step 2/7. Catalyzes the conversion of 3-deoxy-D-arabino-heptulosonate 7-phosphate (DAHP) to dehydroquinate (DHQ). This chain is 3-dehydroquinate synthase, found in Ruminiclostridium cellulolyticum (strain ATCC 35319 / DSM 5812 / JCM 6584 / H10) (Clostridium cellulolyticum).